A 964-amino-acid chain; its full sequence is Translation initiation factor IF-2 (964 aa).

A compositionally biased stretch (basic and acidic residues) spans 1–10 (MSDKTNDDKT). Positions 1 to 379 (MSDKTNDDKT…SQMQETREKI (379 aa)) are disordered. Residues 27–37 (EQSTVRQNFSH) show a composition bias toward polar residues. Residues 77–102 (APAASTPAPAQAAQPAQAAPVVRAPA) show a composition bias toward low complexity. Pro residues predominate over residues 103-113 (PATPAPKPAAP). A compositionally biased stretch (low complexity) spans 114–140 (AAPVTKPHVAQQRPAQQRPGGQQAQRP). Basic and acidic residues-rich tracts occupy residues 156–227 (SEMD…EAAK) and 234–243 (ARTERRDDAR). A compositionally biased stretch (low complexity) spans 250 to 278 (RPQQAGRPQGNRPPQGGRPQQGGPRPAAP). The span at 323 to 338 (PEVRAPKVVKTEDDRR) shows a compositional bias: basic and acidic residues. Residues 462–629 (SRPPVVTIMG…AILLQAEILD (168 aa)) form the tr-type G domain. The tract at residues 471–478 (GHVDHGKT) is G1. 471-478 (GHVDHGKT) lines the GTP pocket. Residues 496–500 (GITQH) form a G2 region. The tract at residues 517–520 (DTPG) is G3. Residues 517–521 (DTPGH) and 571–574 (NKID) each bind GTP. Residues 571 to 574 (NKID) are G4. The segment at 607–609 (SAK) is G5.

This sequence belongs to the TRAFAC class translation factor GTPase superfamily. Classic translation factor GTPase family. IF-2 subfamily.

It localises to the cytoplasm. In terms of biological role, one of the essential components for the initiation of protein synthesis. Protects formylmethionyl-tRNA from spontaneous hydrolysis and promotes its binding to the 30S ribosomal subunits. Also involved in the hydrolysis of GTP during the formation of the 70S ribosomal complex. This is Translation initiation factor IF-2 from Brucella anthropi (strain ATCC 49188 / DSM 6882 / CCUG 24695 / JCM 21032 / LMG 3331 / NBRC 15819 / NCTC 12168 / Alc 37) (Ochrobactrum anthropi).